A 99-amino-acid polypeptide reads, in one-letter code: Large ribosomal subunit protein uL23 (99 aa).

Belongs to the universal ribosomal protein uL23 family. As to quaternary structure, part of the 50S ribosomal subunit. Contacts protein L29, and trigger factor when it is bound to the ribosome.

Its function is as follows. One of the early assembly proteins it binds 23S rRNA. One of the proteins that surrounds the polypeptide exit tunnel on the outside of the ribosome. Forms the main docking site for trigger factor binding to the ribosome. The chain is Large ribosomal subunit protein uL23 from Francisella tularensis subsp. tularensis (strain SCHU S4 / Schu 4).